The following is a 331-amino-acid chain: D-galactose/methyl-galactoside binding periplasmic protein MglB (331 aa).

An N-terminal signal peptide occupies residues Met1–Ala24. The beta-D-galactose site is built by Asp38 and Asn115. Residues Asp38 and Asn115 each coordinate beta-D-glucose. 5 residues coordinate Ca(2+): Asp158, Asn160, Asp162, Lys164, and Gln166. 3 residues coordinate beta-D-galactose: His176, Asp178, and Arg182. Beta-D-glucose is bound by residues His176, Asp178, and Arg182. Glu229 is a Ca(2+) binding site. Beta-D-galactose is bound by residues Asn235, Asp259, and Asn279. The beta-D-glucose site is built by Asn235, Asp259, and Asn279.

This sequence belongs to the bacterial solute-binding protein 2 family. As to quaternary structure, the ABC transporter complex is composed of one ATP-binding protein (MglA), two transmembrane proteins (MglC) and a solute-binding protein (MglB).

Its subcellular location is the periplasm. Part of the ABC transporter complex MglABC involved in galactose/methyl galactoside import. This is D-galactose/methyl-galactoside binding periplasmic protein MglB (mglB) from Haemophilus influenzae (strain ATCC 51907 / DSM 11121 / KW20 / Rd).